A 120-amino-acid polypeptide reads, in one-letter code: MLVNRRYTAKGKNLPSSPKKVRPIADNIRGESYIKAIAVLCSMPNKGAKLLEKVVKSAASNAMYHNKNLSEDMIFVKTVMVDDGRRRKKIWPRARGRADRLVNRNCHIFVEVDEKKDIKG.

Residues 1–22 (MLVNRRYTAKGKNLPSSPKKVR) form a disordered region.

Belongs to the universal ribosomal protein uL22 family. Part of the 50S ribosomal subunit.

This protein binds specifically to 23S rRNA; its binding is stimulated by other ribosomal proteins, e.g. L4, L17, and L20. It is important during the early stages of 50S assembly. It makes multiple contacts with different domains of the 23S rRNA in the assembled 50S subunit and ribosome. Functionally, the globular domain of the protein is located near the polypeptide exit tunnel on the outside of the subunit, while an extended beta-hairpin is found that lines the wall of the exit tunnel in the center of the 70S ribosome. In Borreliella burgdorferi (strain ATCC 35210 / DSM 4680 / CIP 102532 / B31) (Borrelia burgdorferi), this protein is Large ribosomal subunit protein uL22.